The following is a 207-amino-acid chain: Uracil phosphoribosyltransferase (207 aa).

Residues Arg-77, Arg-102, and 129-137 each bind 5-phospho-alpha-D-ribose 1-diphosphate; that span reads DPMLATGGS. Residues Ile-192 and 197 to 199 each bind uracil; that span reads GDA. Asp-198 is a binding site for 5-phospho-alpha-D-ribose 1-diphosphate.

It belongs to the UPRTase family. The cofactor is Mg(2+).

It catalyses the reaction UMP + diphosphate = 5-phospho-alpha-D-ribose 1-diphosphate + uracil. Its pathway is pyrimidine metabolism; UMP biosynthesis via salvage pathway; UMP from uracil: step 1/1. Its activity is regulated as follows. Allosterically activated by GTP. Catalyzes the conversion of uracil and 5-phospho-alpha-D-ribose 1-diphosphate (PRPP) to UMP and diphosphate. This is Uracil phosphoribosyltransferase from Nocardia farcinica (strain IFM 10152).